The following is a 507-amino-acid chain: Beta-glucosidase 12 (507 aa).

Residues 1 to 22 form the signal peptide; sequence MRTIYLSLLVFIIVLALNEVMA. An a beta-D-glucoside-binding site is contributed by Gln-50. A glycan (N-linked (GlcNAc...) asparagine) is linked at Asn-81. Residues His-154 and 199 to 200 contribute to the a beta-D-glucoside site; that span reads NE. Catalysis depends on Glu-200, which acts as the Proton donor. An intrachain disulfide couples Cys-219 to Cys-227. Asn-226 is a glycosylation site (N-linked (GlcNAc...) asparagine). Tyr-344 contacts a beta-D-glucoside. A glycan (N-linked (GlcNAc...) asparagine) is linked at Asn-358. A beta-D-glucoside-binding positions include Glu-414, Trp-459, 466 to 467, and Phe-475; that span reads EW. The active-site Nucleophile is Glu-414.

Belongs to the glycosyl hydrolase 1 family.

The catalysed reaction is Hydrolysis of terminal, non-reducing beta-D-glucosyl residues with release of beta-D-glucose.. The sequence is that of Beta-glucosidase 12 from Arabidopsis thaliana (Mouse-ear cress).